Here is a 213-residue protein sequence, read N- to C-terminus: BAG family molecular chaperone regulator 6, mitochondrial (213 aa).

In terms of domain architecture, IQ spans 53–82 (DDAAAARIQAAFRGHLVRRHAAAVRGADDE). The BAG domain maps to 75 to 152 (AVRGADDEAT…GLQEVFDAVL (78 aa)).

As to quaternary structure, interacts with CAM1-1 under normal conditions. Dissociation of the interaction when calcium-CAM1-1 binding increases under saline-alkaline stress.

The protein resides in the mitochondrion. In terms of biological role, co-chaperone that regulates stress responses. Acts as a negative regulator of saline-alkaline stress tolerance. May participate in stress response through regulating the homeostasis of iron, manganese and zinc ions. The sequence is that of BAG family molecular chaperone regulator 6, mitochondrial from Oryza sativa subsp. japonica (Rice).